The chain runs to 240 residues: Pyridoxine 5'-phosphate synthase (240 aa).

Asn-7 contributes to the 3-amino-2-oxopropyl phosphate binding site. 9–10 (DH) is a binding site for 1-deoxy-D-xylulose 5-phosphate. Arg-18 serves as a coordination point for 3-amino-2-oxopropyl phosphate. His-43 functions as the Proton acceptor in the catalytic mechanism. The 1-deoxy-D-xylulose 5-phosphate site is built by Arg-45 and His-50. The active-site Proton acceptor is the Glu-70. Thr-100 is a binding site for 1-deoxy-D-xylulose 5-phosphate. His-191 serves as the catalytic Proton donor. 3-amino-2-oxopropyl phosphate contacts are provided by residues Gly-192 and 213–214 (GH).

The protein belongs to the PNP synthase family. As to quaternary structure, homooctamer; tetramer of dimers.

The protein resides in the cytoplasm. The enzyme catalyses 3-amino-2-oxopropyl phosphate + 1-deoxy-D-xylulose 5-phosphate = pyridoxine 5'-phosphate + phosphate + 2 H2O + H(+). The protein operates within cofactor biosynthesis; pyridoxine 5'-phosphate biosynthesis; pyridoxine 5'-phosphate from D-erythrose 4-phosphate: step 5/5. In terms of biological role, catalyzes the complicated ring closure reaction between the two acyclic compounds 1-deoxy-D-xylulose-5-phosphate (DXP) and 3-amino-2-oxopropyl phosphate (1-amino-acetone-3-phosphate or AAP) to form pyridoxine 5'-phosphate (PNP) and inorganic phosphate. The polypeptide is Pyridoxine 5'-phosphate synthase (Crocosphaera subtropica (strain ATCC 51142 / BH68) (Cyanothece sp. (strain ATCC 51142))).